The following is an 85-amino-acid chain: ATP synthase subunit c (85 aa).

Helical transmembrane passes span 10 to 30 (GLALLGKYLGAGLCMGIGAIG) and 65 to 85 (AVAETTGIYSLLIAFMILLVV).

This sequence belongs to the ATPase C chain family. In terms of assembly, F-type ATPases have 2 components, F(1) - the catalytic core - and F(0) - the membrane proton channel. F(1) has five subunits: alpha(3), beta(3), gamma(1), delta(1), epsilon(1). F(0) has three main subunits: a(1), b(2) and c(10-14). The alpha and beta chains form an alternating ring which encloses part of the gamma chain. F(1) is attached to F(0) by a central stalk formed by the gamma and epsilon chains, while a peripheral stalk is formed by the delta and b chains.

Its subcellular location is the cell inner membrane. In terms of biological role, f(1)F(0) ATP synthase produces ATP from ADP in the presence of a proton or sodium gradient. F-type ATPases consist of two structural domains, F(1) containing the extramembraneous catalytic core and F(0) containing the membrane proton channel, linked together by a central stalk and a peripheral stalk. During catalysis, ATP synthesis in the catalytic domain of F(1) is coupled via a rotary mechanism of the central stalk subunits to proton translocation. Functionally, key component of the F(0) channel; it plays a direct role in translocation across the membrane. A homomeric c-ring of between 10-14 subunits forms the central stalk rotor element with the F(1) delta and epsilon subunits. The chain is ATP synthase subunit c from Thermotoga maritima (strain ATCC 43589 / DSM 3109 / JCM 10099 / NBRC 100826 / MSB8).